The sequence spans 382 residues: MTEFWLISAPGEKTCQQTWEKLHAATTKNNNLAVSSKFNIPDLKVGTLDVLVGLSDELAKLDAFVEGVVKKVAQYMADVLEDSKDKVQENLLASGVDLVTYITRFQWDMAKYPIKQSLKNISEIIAKGVTQIDNDLKSRASAYNNLKGNLQNLERKNAGSLLTRSLAEIVKKDDFVLDSEYLVTLLVVVPKLNHNDWIKQYETLAEMVVPRSSNVLSEDQDSYLCNVTLFRKAVDDFRHKARENKFIVRDFQYNEEEMKADKEEMTRLSTDKKKQFGPLVRWLKVNFSEAFIAWIHIKALRVFVESVLRYGLPVNFQAMLLQPNKKSVKKLREVLHELYKHLDSSAAAIIDAPMDIPGLNLSQQEYYPYVYYKIDCNLLEFK.

N-acetylthreonine is present on Thr-2.

This sequence belongs to the V-ATPase C subunit family. As to quaternary structure, V-ATPase is a heteromultimeric enzyme made up of two complexes: the ATP-hydrolytic V1 complex and the proton translocation V0 complex. The V1 complex consists of three catalytic AB heterodimers that form a heterohexamer, three peripheral stalks each consisting of EG heterodimers, one central rotor including subunits D and F, and the regulatory subunits C and H. The proton translocation complex V0 consists of the proton transport subunit a, a ring of proteolipid subunits c9c'', rotary subunit d, subunits e and f, and the accessory subunits ATP6AP1/Ac45 and ATP6AP2/PRR. Ubiquitous. Abundant in brain, liver, kidney and testis.

Its subcellular location is the cytoplasmic vesicle. It localises to the secretory vesicle. The protein resides in the synaptic vesicle membrane. The protein localises to the clathrin-coated vesicle membrane. Its function is as follows. Subunit of the V1 complex of vacuolar(H+)-ATPase (V-ATPase), a multisubunit enzyme composed of a peripheral complex (V1) that hydrolyzes ATP and a membrane integral complex (V0) that translocates protons. V-ATPase is responsible for acidifying and maintaining the pH of intracellular compartments and in some cell types, is targeted to the plasma membrane, where it is responsible for acidifying the extracellular environment. Subunit C is necessary for the assembly of the catalytic sector of the enzyme and is likely to have a specific function in its catalytic activity. The chain is V-type proton ATPase subunit C 1 (Atp6v1c1) from Mus musculus (Mouse).